The primary structure comprises 237 residues: Peroxisomal membrane protein 11-1 (237 aa).

Over 1 to 92 (MSTLDATRAE…TLVLLGKSKN (92 aa)) the chain is Cytoplasmic. A helical transmembrane segment spans residues 93 to 113 (ALLSTFLFLDQFVWLGRTGIY). At 114–204 (KNKERTDRIV…VGLLQLSPKK (91 aa)) the chain is on the lumenal side. The helical transmembrane segment at 205-223 (ITPRVTGAFGFVTSLISCY) threads the bilayer. At 224–237 (QQLPSRAPAIKVKA) the chain is on the cytoplasmic side.

Belongs to the peroxin-11 family. Expressed in seedlings, leaf sheaths, flag leaf, panicles and spikelets.

It localises to the peroxisome membrane. Functionally, involved in peroxisomal proliferation. The chain is Peroxisomal membrane protein 11-1 (PEX11-1) from Oryza sativa subsp. japonica (Rice).